We begin with the raw amino-acid sequence, 297 residues long: N-acetylneuraminate lyase (297 aa).

Aceneuramate contacts are provided by Ser47 and Thr48. The Proton donor role is filled by Tyr137. Lys165 acts as the Schiff-base intermediate with substrate in catalysis. Positions 167, 189, 191, 192, and 208 each coordinate aceneuramate.

This sequence belongs to the DapA family. NanA subfamily. As to quaternary structure, homotetramer.

The protein resides in the cytoplasm. The enzyme catalyses aceneuramate = aldehydo-N-acetyl-D-mannosamine + pyruvate. It functions in the pathway amino-sugar metabolism; N-acetylneuraminate degradation; D-fructose 6-phosphate from N-acetylneuraminate: step 1/5. Catalyzes the reversible aldol cleavage of N-acetylneuraminic acid (sialic acid; Neu5Ac) to form pyruvate and N-acetylmannosamine (ManNAc) via a Schiff base intermediate. The chain is N-acetylneuraminate lyase from Escherichia coli (strain SE11).